The following is a 241-amino-acid chain: Phycocyanobilin:ferredoxin oxidoreductase (241 aa).

This sequence belongs to the HY2 family.

It carries out the reaction (2R,3Z)-phycocyanobilin + 4 oxidized [2Fe-2S]-[ferredoxin] = biliverdin IXalpha + 4 reduced [2Fe-2S]-[ferredoxin] + 4 H(+). Its function is as follows. Catalyzes the four-electron reduction of biliverdin IX-alpha (2-electron reduction at both the A and D rings); the reaction proceeds via an isolatable 2-electron intermediate, 181,182-dihydrobiliverdin. This is Phycocyanobilin:ferredoxin oxidoreductase from Prochlorococcus marinus (strain MIT 9312).